A 179-amino-acid chain; its full sequence is Large ribosomal subunit protein uL5 (179 aa).

It belongs to the universal ribosomal protein uL5 family. As to quaternary structure, part of the 50S ribosomal subunit; part of the 5S rRNA/L5/L18/L25 subcomplex. Contacts the 5S rRNA and the P site tRNA. Forms a bridge to the 30S subunit in the 70S ribosome.

In terms of biological role, this is one of the proteins that bind and probably mediate the attachment of the 5S RNA into the large ribosomal subunit, where it forms part of the central protuberance. In the 70S ribosome it contacts protein S13 of the 30S subunit (bridge B1b), connecting the 2 subunits; this bridge is implicated in subunit movement. Contacts the P site tRNA; the 5S rRNA and some of its associated proteins might help stabilize positioning of ribosome-bound tRNAs. The sequence is that of Large ribosomal subunit protein uL5 from Anaplasma marginale (strain Florida).